Here is a 247-residue protein sequence, read N- to C-terminus: O-methyltransferase imqG (247 aa).

Residues glutamate 84, 86–87, and alanine 138 contribute to the S-adenosyl-L-methionine site; that span reads GT. Positions 163, 189, and 190 each coordinate a divalent metal cation. A substrate-binding site is contributed by aspartate 163.

It belongs to the class I-like SAM-binding methyltransferase superfamily. Cation-dependent O-methyltransferase family. CCoAMT subfamily. Homodimer. A divalent metal cation serves as cofactor.

It functions in the pathway secondary metabolite biosynthesis. Functionally, O-methyltransferase; part of the gene cluster that mediates the biosynthesis of imizoquins A to D, tripeptide-derived alkaloids that serve a protective role against oxidative stress that are essential for normal germination. ImqB is a canonical three-module NRPS that assembles the tripeptide backbone of the imizoquins via condensation of Trp, Tyr, and Leu-derived precursors. N-methylation by imqF and phenol oxidation by imqC, followed by cyclization via the FAD-dependent oxidase imqH carry out the three-step transformation of L-tyrosine into tetrahydroisoquinoline. Importantly, this sequence requires the presence of a free amine in the tyrosine moiety, indicating that isoquinoline formation occurs prior to peptide bond formation. The imidazolidin-4-one ring of imizoquins could form following additional oxidation of the methyl-derived bridgehead carbon by imqH. Lastly, O-methylation by imqG and leucine hydroxylation by imqE complete biosynthesis of the imizoquins. This is O-methyltransferase imqG from Aspergillus flavus (strain ATCC 200026 / FGSC A1120 / IAM 13836 / NRRL 3357 / JCM 12722 / SRRC 167).